The primary structure comprises 347 residues: Protein YIPF3 (347 aa).

The segment at 1-31 (MATPAAPASGVRNGAGPEWGGFEENIQGGGS) is disordered. Ala-2 is subject to N-acetylalanine; in Protein YIPF3, N-terminally processed. The Cytoplasmic segment spans residues 2-145 (ATPAAPASGV…PIKMVNFPQK (144 aa)). The chain crosses the membrane as a helical span at residues 146-166 (VAGELYGPLMLVFTLVAILLH). Residues 167 to 184 (GMKTSDTIIREGTLMGTA) are Lumenal-facing. The helical transmembrane segment at 185–205 (IGTCFGYWLGVSSFIYFLAYL) threads the bilayer. Residues 206–211 (CNAQIT) are Cytoplasmic-facing. Residues 212–234 (MLQMLALLGYGLFGHCIVLFITY) traverse the membrane as a helical segment. Over 235-237 (NIH) the chain is Lumenal. The helical transmembrane segment at 238–260 (LHALFYLFWLLVGGLSTLRMVAV) threads the bilayer. At 261–271 (LVSRTVGPTQR) the chain is on the cytoplasmic side. The helical transmembrane segment at 272–292 (LLLCGTLAALHMLFLLYLHFA) threads the bilayer. The Lumenal portion of the chain corresponds to 293–347 (YHKVVEGILDTLEGPNIPPMQRVPRDIPAVLPAARLPVAVINATAKAIAVTLQSH). The N-linked (GlcNAc...) asparagine glycan is linked to Asn-334.

It belongs to the YIP1 family. Interacts with YIPF4 and YIPF5. As to expression, expressed by splenocytes (at protein level).

The protein resides in the cell membrane. Its subcellular location is the golgi apparatus. It is found in the cis-Golgi network membrane. The protein localises to the cytoplasm. Functionally, involved in the maintenance of the Golgi structure. May play a role in hematopoiesis. The sequence is that of Protein YIPF3 (Yipf3) from Mus musculus (Mouse).